Here is a 331-residue protein sequence, read N- to C-terminus: Cytosolic Fe-S cluster assembly factor CFD1 (331 aa).

Residue 25–32 (GKGGVGKS) participates in ATP binding. Positions 211 and 214 each coordinate [4Fe-4S] cluster.

It belongs to the Mrp/NBP35 ATP-binding proteins family. NUBP2/CFD1 subfamily. In terms of assembly, heterotetramer of 2 NBP35 and 2 CFD1 chains. It depends on [4Fe-4S] cluster as a cofactor.

The protein resides in the cytoplasm. In terms of biological role, component of the cytosolic iron-sulfur (Fe/S) protein assembly (CIA) machinery. Required for maturation of extramitochondrial Fe-S proteins. The NBP35-CFD1 heterotetramer forms a Fe-S scaffold complex, mediating the de novo assembly of an Fe-S cluster and its transfer to target apoproteins. This Cryptococcus neoformans var. neoformans serotype D (strain B-3501A) (Filobasidiella neoformans) protein is Cytosolic Fe-S cluster assembly factor CFD1.